The following is a 90-amino-acid chain: Co-chaperonin GroES (90 aa).

This sequence belongs to the GroES chaperonin family. As to quaternary structure, heptamer of 7 subunits arranged in a ring. Interacts with the chaperonin GroEL.

Its subcellular location is the cytoplasm. In terms of biological role, together with the chaperonin GroEL, plays an essential role in assisting protein folding. The GroEL-GroES system forms a nano-cage that allows encapsulation of the non-native substrate proteins and provides a physical environment optimized to promote and accelerate protein folding. GroES binds to the apical surface of the GroEL ring, thereby capping the opening of the GroEL channel. This is Co-chaperonin GroES from Fusobacterium nucleatum subsp. nucleatum (strain ATCC 25586 / DSM 15643 / BCRC 10681 / CIP 101130 / JCM 8532 / KCTC 2640 / LMG 13131 / VPI 4355).